Here is a 363-residue protein sequence, read N- to C-terminus: Fructose-bisphosphate aldolase C (363 aa).

At Tyr5 the chain carries Phosphotyrosine. Phosphoserine occurs at positions 36, 39, and 45. Arg56 lines the substrate pocket. Lys111 is subject to N6-acetyllysine. Lys147 provides a ligand contact to substrate. The active-site Proton acceptor is Glu188. Lys230 serves as the catalytic Schiff-base intermediate with dihydroxyacetone-P.

The protein belongs to the class I fructose-bisphosphate aldolase family. Homotetramer. Interacts with ATP6V1E1. High expression in the adult brain.

It carries out the reaction beta-D-fructose 1,6-bisphosphate = D-glyceraldehyde 3-phosphate + dihydroxyacetone phosphate. It participates in carbohydrate degradation; glycolysis; D-glyceraldehyde 3-phosphate and glycerone phosphate from D-glucose: step 4/4. The chain is Fructose-bisphosphate aldolase C (Aldoc) from Rattus norvegicus (Rat).